The sequence spans 266 residues: MATVPEPINEMMAYYSDENELLFEADGPKQMKSCIQHLDLGSMGDGNIQLQISHQLYNKSFRQVVSVIVAMEKLRNSAYAHVFHDDDLRSILSFIFEEEPVIFETSSDEFLCDAPVQSVKCKLQDREQKSLVLASPCVLKALHLLSQEMSREVVFCMSFVQGEERDNKIPVALGIKDKNLYLSCVKKGDTPTLQLEEVDPKVYPKRNMEKRFVFYKTEIKNTVEFESVLYPNWYISTSQIEERPVFLGHFRGGQDITDFRMETLSP.

The propeptide occupies 1–113 (MATVPEPINE…ETSSDEFLCD (113 aa)).

The protein belongs to the IL-1 family. As to quaternary structure, monomer. In its precursor form, weakly interacts with full-length MEFV; the mature cytokine does not interact at all. Interacts with integrins ITGAV:ITGBV and ITGA5:ITGB1; integrin-binding is required for IL1B signaling. Interacts with cargo receptor TMED10; the interaction is direct and is required for the secretion of IL1B mature form. Interacts with HSP90AB1; the interaction facilitates cargo translocation into the ERGIC. Interacts with HSP90B1; the interaction facilitates cargo translocation into the ERGIC.

Its subcellular location is the cytoplasm. The protein resides in the cytosol. It is found in the secreted. It localises to the lysosome. The protein localises to the extracellular exosome. In terms of biological role, potent pro-inflammatory cytokine. Initially discovered as the major endogenous pyrogen, induces prostaglandin synthesis, neutrophil influx and activation, T-cell activation and cytokine production, B-cell activation and antibody production, and fibroblast proliferation and collagen production. Promotes Th17 differentiation of T-cells. Synergizes with IL12/interleukin-12 to induce IFNG synthesis from T-helper 1 (Th1) cells. Plays a role in angiogenesis by inducing VEGF production synergistically with TNF and IL6. Involved in transduction of inflammation downstream of pyroptosis: its mature form is specifically released in the extracellular milieu by passing through the gasdermin-D (GSDMD) pore. The polypeptide is Interleukin-1 beta (IL1B) (Bubalus carabanensis (Swamp type water buffalo)).